The sequence spans 353 residues: Trans-enoyl reductase fsa3 (353 aa).

An NADP(+)-binding site is contributed by 45–48; sequence VDTK. Residue 131-138 coordinates substrate; the sequence is ISFMTTGL. NADP(+) contacts are provided by residues 166-169, 189-192, Y207, and 254-255; these read SSAT, SPRN, and LE. 275-279 lines the substrate pocket; that stretch reads GPQML. Residue 344–345 coordinates NADP(+); the sequence is IS.

This sequence belongs to the zinc-containing alcohol dehydrogenase family. As to quaternary structure, monomer.

It carries out the reaction L-serine + 7 malonyl-CoA + acetyl-CoA + 2 S-adenosyl-L-methionine + ATP + 8 NADPH + 11 H(+) = (5S)-3-[(2E,6R,8E,10E,12E)-2,6-dimethyltetradeca-2,8,10,12-tetraenoyl]-5-(hydroxymethyl)pyrrolidine-2,4-dione + AMP + 2 S-adenosyl-L-homocysteine + 7 CO2 + diphosphate + 8 NADP(+) + 8 CoA + 6 H2O. It participates in mycotoxin biosynthesis. Its function is as follows. Trans-enoyl reductase; part of the gene cluster that mediates the biosynthesis of HIV-1 integrase inhibitor equisetin and of fusarisetin A, both trans-fused decalin-containing tetramic acids showing also antimicrobial activity. The PKS module of fsa1 together with the enoylreductase fsa3 catalyze the formation of the polyketide unit which is then conjugated to L-serine by the condensation domain of the fsa1 NRPS module. Activity of the Dieckmann cyclase domain (RED) results in release of the Dieckmann product intermediate. Diels-Alderase fsa2 is involved in endo-selective Diels-Alder cycloaddition to form the decalin ring, leading to the production of N-desmethylequisetin also called trichosetin. Subsequent N-methylation is carried out by fsa4 to give equisetin. The enzymatic gene responsible for the conversion of equisetin to fusarisetin A has not been identified yet and is probably located outside of the fsa cluster. This chain is Trans-enoyl reductase fsa3, found in Fusarium sp. (strain FN080326).